The primary structure comprises 123 residues: Cytochrome b-c1 complex subunit 7 (123 aa).

This sequence belongs to the UQCRB/QCR7 family. Component of the ubiquinol-cytochrome c oxidoreductase (cytochrome b-c1 complex, complex III, CIII), a multisubunit enzyme composed of 3 respiratory subunits cytochrome b, cytochrome c1 and Rieske protein, 2 core protein subunits, and additional low-molecular weight protein subunits. The complex exists as an obligatory dimer and forms supercomplexes (SCs) in the inner mitochondrial membrane with cytochrome c oxidase (complex IV, CIV). In terms of processing, the N-terminus is blocked.

The protein resides in the mitochondrion inner membrane. Functionally, component of the ubiquinol-cytochrome c oxidoreductase, a multisubunit transmembrane complex that is part of the mitochondrial electron transport chain which drives oxidative phosphorylation. The respiratory chain contains 3 multisubunit complexes succinate dehydrogenase (complex II, CII), ubiquinol-cytochrome c oxidoreductase (cytochrome b-c1 complex, complex III, CIII) and cytochrome c oxidase (complex IV, CIV), that cooperate to transfer electrons derived from NADH and succinate to molecular oxygen, creating an electrochemical gradient over the inner membrane that drives transmembrane transport and the ATP synthase. The cytochrome b-c1 complex catalyzes electron transfer from ubiquinol to cytochrome c, linking this redox reaction to translocation of protons across the mitochondrial inner membrane, with protons being carried across the membrane as hydrogens on the quinol. In the process called Q cycle, 2 protons are consumed from the matrix, 4 protons are released into the intermembrane space and 2 electrons are passed to cytochrome c. This chain is Cytochrome b-c1 complex subunit 7, found in Solanum tuberosum (Potato).